We begin with the raw amino-acid sequence, 107 residues long: Nucleoid-associated protein NE0434 (107 aa).

This sequence belongs to the YbaB/EbfC family. As to quaternary structure, homodimer.

It is found in the cytoplasm. The protein resides in the nucleoid. In terms of biological role, binds to DNA and alters its conformation. May be involved in regulation of gene expression, nucleoid organization and DNA protection. This is Nucleoid-associated protein NE0434 from Nitrosomonas europaea (strain ATCC 19718 / CIP 103999 / KCTC 2705 / NBRC 14298).